The chain runs to 569 residues: MTLSDKEIIVKDLTFRYKEQKDRNAIEGINLEVEKGEFIVIMGPSGAGKSTLAQCLNGLIPHFTKGHYSGEVVVRGIKVKETPVSKMAKEIGLVFQDFEAQLFSTNTKLEIAFGPENFGVPREEIEEIIRRVLKIVNLEGLEDRPPSTLSGGQKQRLAIGSVLACMPSILCMDEPTTDLDPIGKIGVFNIARELHEEKELTLIIIEHETEEALNADRIILMEKGKIIKDGKPREVLKEVDLMEKIGLMPLQIPKYFSQVSNLEKADLPLTYEEGVQKFKELGLQIDEGKYQEILRREDEREKSYGDVIIQAKDVEYVYSNGTKALDGINLEIREGEFIALLGHNGSGKTTLAKHFNCLLKPTRGSVIVYGKDTKNSNVYEIGNYVGYAFQNPDHQIFADTVYDEIAFGPRMRGCTEEEVKERVAEALKAVDMEGFEKEDPFALSKGERQRIAVASILAARPKVIILDEPTTGLDYKEQKRMMELVKRLNESGHTIIMITHTMWIVAEYAHKVAVMRDGKIEMYGKVRDVFKEEERLLELSLKPPSIVSLSNRLGKTFLSVEEMVSCTKR.

2 consecutive ABC transporter domains span residues 8–248 (IIVK…IGLM) and 309–542 (IQAK…LSLK). Residues 43–50 (GPSGAGKS) and 342–349 (GHNGSGKT) each bind ATP.

The protein belongs to the ABC transporter superfamily.

It localises to the cell membrane. Functionally, probably part of an ABC transporter complex. Responsible for energy coupling to the transport system. The sequence is that of Putative ABC transporter ATP-binding protein TTE1589 from Caldanaerobacter subterraneus subsp. tengcongensis (strain DSM 15242 / JCM 11007 / NBRC 100824 / MB4) (Thermoanaerobacter tengcongensis).